Here is a 360-residue protein sequence, read N- to C-terminus: Dual-specificity RNA methyltransferase RlmN (360 aa).

Glu-89 functions as the Proton acceptor in the catalytic mechanism. Residues Asp-95 to Asp-330 form the Radical SAM core domain. A disulfide bridge links Cys-102 with Cys-333. [4Fe-4S] cluster is bound by residues Cys-109, Cys-113, and Cys-116. S-adenosyl-L-methionine contacts are provided by residues Gly-159–Glu-160, Ser-191, Ser-213–His-215, and Asn-290. The active-site S-methylcysteine intermediate is the Cys-333.

This sequence belongs to the radical SAM superfamily. RlmN family. [4Fe-4S] cluster is required as a cofactor.

The protein resides in the cytoplasm. The enzyme catalyses adenosine(2503) in 23S rRNA + 2 reduced [2Fe-2S]-[ferredoxin] + 2 S-adenosyl-L-methionine = 2-methyladenosine(2503) in 23S rRNA + 5'-deoxyadenosine + L-methionine + 2 oxidized [2Fe-2S]-[ferredoxin] + S-adenosyl-L-homocysteine. It catalyses the reaction adenosine(37) in tRNA + 2 reduced [2Fe-2S]-[ferredoxin] + 2 S-adenosyl-L-methionine = 2-methyladenosine(37) in tRNA + 5'-deoxyadenosine + L-methionine + 2 oxidized [2Fe-2S]-[ferredoxin] + S-adenosyl-L-homocysteine. Specifically methylates position 2 of adenine 2503 in 23S rRNA and position 2 of adenine 37 in tRNAs. m2A2503 modification seems to play a crucial role in the proofreading step occurring at the peptidyl transferase center and thus would serve to optimize ribosomal fidelity. This chain is Dual-specificity RNA methyltransferase RlmN, found in Alkalilimnicola ehrlichii (strain ATCC BAA-1101 / DSM 17681 / MLHE-1).